The chain runs to 353 residues: Guanine nucleotide-binding protein alpha-1 subunit (353 aa).

The N-myristoyl glycine moiety is linked to residue G2. C3 is lipidated: S-palmitoyl cysteine. In terms of domain architecture, G-alpha spans 32 to 353; it reads NEIKMLLLGA…QVNLRDCGLL (322 aa). Residues 35–48 are G1 motif; sequence KMLLLGAGESGKST. GTP is bound by residues E43, S44, G45, K46, S47, T48, D150, L175, T181, G203, N269, K270, D272, and A325. S47 provides a ligand contact to Mg(2+). The segment at 173-181 is G2 motif; sequence DVLRSRVKT. T181 serves as a coordination point for Mg(2+). Residues 196–205 form a G3 motif region; the sequence is YKLFDVGGQR. A G4 motif region spans residues 265 to 272; sequence ILFLNKID. Residues 323–328 form a G5 motif region; the sequence is TCATDT.

Belongs to the G-alpha family. As to quaternary structure, g proteins are composed of 3 units; alpha, beta and gamma. The alpha chain contains the guanine nucleotide binding site. The cofactor is Mg(2+).

Guanine nucleotide-binding proteins (G proteins) are involved as modulators or transducers in various transmembrane signaling systems. The protein is Guanine nucleotide-binding protein alpha-1 subunit (GPA1) of Mycosarcoma maydis (Corn smut fungus).